A 661-amino-acid polypeptide reads, in one-letter code: Pentatricopeptide repeat-containing protein At5g66631 (661 aa).

9 PPR repeats span residues 139–173 (VHFS…GEEK), 176–210 (CTES…GGIP), 211–245 (NSRT…RITR), 246–280 (TLKH…GKFP), 410–444 (DAYT…GIKL), 445–475 (PFST…DRTL), 484–518 (LMLL…GVSP), 519–553 (DIQT…GLEP), and 554–588 (DPYM…NLMP).

Belongs to the PPR family. P subfamily.

In Arabidopsis thaliana (Mouse-ear cress), this protein is Pentatricopeptide repeat-containing protein At5g66631.